We begin with the raw amino-acid sequence, 420 residues long: RING finger protein 39 (420 aa).

The RING-type zinc finger occupies Cys88–Gly135. The B30.2/SPRY domain occupies Asp210–Ser420. Residues Asp246–Lys265 are disordered.

Its subcellular location is the cytoplasm. It catalyses the reaction S-ubiquitinyl-[E2 ubiquitin-conjugating enzyme]-L-cysteine + [acceptor protein]-L-lysine = [E2 ubiquitin-conjugating enzyme]-L-cysteine + N(6)-ubiquitinyl-[acceptor protein]-L-lysine.. It functions in the pathway protein modification; protein ubiquitination. Its function is as follows. Plays an inhibitory role in anti-RNA viral innate immunity by targeting the adapter DDX3X and promoting its 'Lys-48'-linked polyubiquitination. Alternatively, enhances the cGAS-STING pathway activation by promoting 'Lys-63'-linked ubiquitination of STING1, facilitating the STING1-TBK1 complex formation and STING1 activation. In Pan troglodytes (Chimpanzee), this protein is RING finger protein 39 (RNF39).